The primary structure comprises 241 residues: UDP-2,3-diacylglucosamine hydrolase (241 aa).

Mn(2+) is bound by residues aspartate 8, histidine 10, aspartate 41, asparagine 79, and histidine 114. 79–80 lines the substrate pocket; sequence NR. Aspartate 122, serine 160, asparagine 164, lysine 167, and histidine 195 together coordinate substrate. Mn(2+)-binding residues include histidine 195 and histidine 197.

This sequence belongs to the LpxH family. Requires Mn(2+) as cofactor.

The protein localises to the cell inner membrane. It catalyses the reaction UDP-2-N,3-O-bis[(3R)-3-hydroxytetradecanoyl]-alpha-D-glucosamine + H2O = 2-N,3-O-bis[(3R)-3-hydroxytetradecanoyl]-alpha-D-glucosaminyl 1-phosphate + UMP + 2 H(+). The protein operates within glycolipid biosynthesis; lipid IV(A) biosynthesis; lipid IV(A) from (3R)-3-hydroxytetradecanoyl-[acyl-carrier-protein] and UDP-N-acetyl-alpha-D-glucosamine: step 4/6. Functionally, hydrolyzes the pyrophosphate bond of UDP-2,3-diacylglucosamine to yield 2,3-diacylglucosamine 1-phosphate (lipid X) and UMP by catalyzing the attack of water at the alpha-P atom. Involved in the biosynthesis of lipid A, a phosphorylated glycolipid that anchors the lipopolysaccharide to the outer membrane of the cell. In Aeromonas hydrophila subsp. hydrophila (strain ATCC 7966 / DSM 30187 / BCRC 13018 / CCUG 14551 / JCM 1027 / KCTC 2358 / NCIMB 9240 / NCTC 8049), this protein is UDP-2,3-diacylglucosamine hydrolase.